Reading from the N-terminus, the 97-residue chain is Co-chaperonin GroES (97 aa).

It belongs to the GroES chaperonin family. In terms of assembly, heptamer of 7 subunits arranged in a ring. Interacts with the chaperonin GroEL.

The protein resides in the cytoplasm. Together with the chaperonin GroEL, plays an essential role in assisting protein folding. The GroEL-GroES system forms a nano-cage that allows encapsulation of the non-native substrate proteins and provides a physical environment optimized to promote and accelerate protein folding. GroES binds to the apical surface of the GroEL ring, thereby capping the opening of the GroEL channel. The chain is Co-chaperonin GroES from Stutzerimonas stutzeri (strain A1501) (Pseudomonas stutzeri).